Reading from the N-terminus, the 683-residue chain is Acetyl-coenzyme A synthetase 2 (683 aa).

Residues 207–210 and T326 each bind CoA; that span reads RGGK. ATP contacts are provided by residues 402-404, 426-431, D517, and R532; these read GEP and DTFWQT. S540 lines the CoA pocket. R543 is a binding site for ATP. Position 613 (R613) interacts with CoA.

This sequence belongs to the ATP-dependent AMP-binding enzyme family.

The enzyme catalyses acetate + ATP + CoA = acetyl-CoA + AMP + diphosphate. This is Acetyl-coenzyme A synthetase 2 (ACS2) from Candida glabrata (strain ATCC 2001 / BCRC 20586 / JCM 3761 / NBRC 0622 / NRRL Y-65 / CBS 138) (Yeast).